The sequence spans 21 residues: Endo-1,4-beta-xylanase A (21 aa).

The protein belongs to the glycosyl hydrolase 10 (cellulase F) family.

It carries out the reaction Endohydrolysis of (1-&gt;4)-beta-D-xylosidic linkages in xylans.. It functions in the pathway glycan degradation; xylan degradation. In Dictyoglomus sp. (strain B4A), this protein is Endo-1,4-beta-xylanase A.